We begin with the raw amino-acid sequence, 540 residues long: Pentatricopeptide repeat-containing protein At3g29290 (540 aa).

12 PPR repeats span residues 106 to 140, 141 to 175, 177 to 205, 213 to 247, 248 to 282, 283 to 317, 318 to 352, 353 to 387, 389 to 423, 424 to 458, 459 to 487, and 489 to 523; these read NEETLSKRLRKLSRLDKVRSALELFDSMRFLGLQP, NAHACNSFLSCLLRNGDIQKAFTVFEFMRKKENVT, HTYSLMLKAVAEVKGCESALRMFRELERE, DVVLYNTAISLCGRINNVYETERIWRVMKGDGHIG, TEITYSLLVSIFVRCGRSELALDVYDEMVNNKISL, REDAMYAMISACTKEEKWDLALKIFQSMLKKGMKP, NLVACNTLINSLGKAGKVGLVFKVYSVLKSLGHKP, DEYTWNALLTALYKANRYEDVLQLFDMIRSENLCC, NEYLYNTAMVSCQKLGYWEKAVKLLYEMEGSGLTV, STSSYNLVISACEKSRKSKVALLVYEHMAQRDCKP, NTFTYLSLVRSCIWGSLWDEVEDILKKVE, and DVSLYNAAIHGMCLRREFKFAKELYVKMREMGLEP.

The protein belongs to the PPR family. P subfamily.

This Arabidopsis thaliana (Mouse-ear cress) protein is Pentatricopeptide repeat-containing protein At3g29290 (EMB2076).